We begin with the raw amino-acid sequence, 166 residues long: UPF0561 protein C2orf68 homolog (166 aa).

Basic and acidic residues predominate over residues 36-49 (RDDYDKKVKQAAKE). The segment at 36-108 (RDDYDKKVKQ…EPEPPGHQLF (73 aa)) is disordered.

Belongs to the UPF0561 family.

The polypeptide is UPF0561 protein C2orf68 homolog (Bos taurus (Bovine)).